Reading from the N-terminus, the 224-residue chain is uncharacterized protein (224 aa).

The first 17 residues, 1-17 (MFTILLYFLVLFWVTNA), serve as a signal peptide directing secretion.

This is an uncharacterized protein from Caenorhabditis elegans.